A 151-amino-acid chain; its full sequence is FIS1-related protein fis-2 (151 aa).

Residues 126 to 146 (LIGAAIVGGGALALAGLVAIF) form a helical membrane-spanning segment.

Belongs to the FIS1 family.

It is found in the mitochondrion outer membrane. The protein localises to the peroxisome membrane. The protein resides in the mitochondrion. In terms of biological role, involved in the fragmentation of the mitochondrial network. Involved in perinuclear clustering of the mitochondrial network. May act, redundantly with fis-1, downstream of mitochondrial fission, before the fission products participate in mitochondrial homeostasis, mitophagy, or apoptosis. Plays a role in apoptosis by promoting mitochondrial elimination and cell-death execution, acting downstream of caspase ced-3, and perhaps independently of dynamin GTPase drp-1, caspase ced-9 and apoptosis-inducing factor AIFM/wah-1. The protein is FIS1-related protein fis-2 of Caenorhabditis elegans.